The following is a 620-amino-acid chain: Glutathione-regulated potassium-efflux system protein KefC (620 aa).

The next 12 membrane-spanning stretches (helical) occupy residues 4–24 (HTLI…PIAV), 26–46 (LGLG…PWGL), 54–74 (SILH…GLEL), 90–110 (GALQ…LLGL), 114–134 (VAEL…MQAM), 149–169 (FAVL…IPLL), 178–198 (MGAF…VVLL), 218–238 (VFSA…EEVG), 270–290 (GLLL…GTLI), 294–314 (LRIV…LWLI), 327–347 (WFAV…GAAQ), and 359–379 (SLTL…VILN). One can recognise an RCK N-terminal domain in the interval 399–518 (QPRVIIAGFG…AGVEKPERET (120 aa)). The disordered stretch occupies residues 597–620 (GWQGTEEGKHTGNMADEPETKPSS).

It belongs to the monovalent cation:proton antiporter 2 (CPA2) transporter (TC 2.A.37) family. KefC subfamily. Homodimer. Interacts with the regulatory subunit KefF.

It localises to the cell inner membrane. In terms of biological role, pore-forming subunit of a potassium efflux system that confers protection against electrophiles. Catalyzes K(+)/H(+) antiport. In Escherichia coli O45:K1 (strain S88 / ExPEC), this protein is Glutathione-regulated potassium-efflux system protein KefC.